Consider the following 282-residue polypeptide: tRNA (guanine-N(1)-)-methyltransferase (282 aa).

Residues 77 to 114 form a disordered region; that stretch reads TGPAATVSDLESSAEHKRNLRPATTNGDAEPLGEKAGG. S-adenosyl-L-methionine is bound by residues Gly149 and 173-178; that span reads IGDYVL.

This sequence belongs to the RNA methyltransferase TrmD family. In terms of assembly, homodimer.

The protein localises to the cytoplasm. It carries out the reaction guanosine(37) in tRNA + S-adenosyl-L-methionine = N(1)-methylguanosine(37) in tRNA + S-adenosyl-L-homocysteine + H(+). Its function is as follows. Specifically methylates guanosine-37 in various tRNAs. This is tRNA (guanine-N(1)-)-methyltransferase from Corynebacterium jeikeium (strain K411).